The primary structure comprises 425 residues: Serine--tRNA ligase (425 aa).

T231 to E233 contributes to the L-serine binding site. An ATP-binding site is contributed by R262–E264. E285 lines the L-serine pocket. E349–S352 serves as a coordination point for ATP. Residue S385 coordinates L-serine.

It belongs to the class-II aminoacyl-tRNA synthetase family. Type-1 seryl-tRNA synthetase subfamily. In terms of assembly, homodimer. The tRNA molecule binds across the dimer.

The protein resides in the cytoplasm. The catalysed reaction is tRNA(Ser) + L-serine + ATP = L-seryl-tRNA(Ser) + AMP + diphosphate + H(+). It catalyses the reaction tRNA(Sec) + L-serine + ATP = L-seryl-tRNA(Sec) + AMP + diphosphate + H(+). It participates in aminoacyl-tRNA biosynthesis; selenocysteinyl-tRNA(Sec) biosynthesis; L-seryl-tRNA(Sec) from L-serine and tRNA(Sec): step 1/1. Functionally, catalyzes the attachment of serine to tRNA(Ser). Is also able to aminoacylate tRNA(Sec) with serine, to form the misacylated tRNA L-seryl-tRNA(Sec), which will be further converted into selenocysteinyl-tRNA(Sec). The protein is Serine--tRNA ligase of Bartonella quintana (strain Toulouse) (Rochalimaea quintana).